The sequence spans 273 residues: 4-hydroxy-tetrahydrodipicolinate reductase (273 aa).

Residue 12–17 (GAGGRM) participates in NAD(+) binding. Residue R39 participates in NADP(+) binding. NAD(+) is bound by residues 102–104 (GTT) and 126–129 (AANF). The active-site Proton donor/acceptor is the H159. H160 is a binding site for (S)-2,3,4,5-tetrahydrodipicolinate. The active-site Proton donor is the K163. 169 to 170 (GT) is a (S)-2,3,4,5-tetrahydrodipicolinate binding site.

Belongs to the DapB family. Homotetramer.

It localises to the cytoplasm. The enzyme catalyses (S)-2,3,4,5-tetrahydrodipicolinate + NAD(+) + H2O = (2S,4S)-4-hydroxy-2,3,4,5-tetrahydrodipicolinate + NADH + H(+). The catalysed reaction is (S)-2,3,4,5-tetrahydrodipicolinate + NADP(+) + H2O = (2S,4S)-4-hydroxy-2,3,4,5-tetrahydrodipicolinate + NADPH + H(+). Its pathway is amino-acid biosynthesis; L-lysine biosynthesis via DAP pathway; (S)-tetrahydrodipicolinate from L-aspartate: step 4/4. Catalyzes the conversion of 4-hydroxy-tetrahydrodipicolinate (HTPA) to tetrahydrodipicolinate. This chain is 4-hydroxy-tetrahydrodipicolinate reductase, found in Sodalis glossinidius (strain morsitans).